The sequence spans 908 residues: Protein translocase subunit SecA (908 aa).

ATP contacts are provided by residues Gln-87, 105–109 (GEGKT), and Asp-512. A disordered region spans residues 860–908 (AESLVGSSDEHEAVTAQAPMIRDGEKVGRNDPCPCGSGRKYKQCHGKLS). Residues Cys-892, Cys-894, Cys-903, and His-904 each contribute to the Zn(2+) site. The segment covering 898–908 (RKYKQCHGKLS) has biased composition (basic residues).

It belongs to the SecA family. As to quaternary structure, monomer and homodimer. Part of the essential Sec protein translocation apparatus which comprises SecA, SecYEG and auxiliary proteins SecDF-YajC and YidC. The cofactor is Zn(2+).

It is found in the cell inner membrane. The protein resides in the cytoplasm. The catalysed reaction is ATP + H2O + cellular proteinSide 1 = ADP + phosphate + cellular proteinSide 2.. Functionally, part of the Sec protein translocase complex. Interacts with the SecYEG preprotein conducting channel. Has a central role in coupling the hydrolysis of ATP to the transfer of proteins into and across the cell membrane, serving both as a receptor for the preprotein-SecB complex and as an ATP-driven molecular motor driving the stepwise translocation of polypeptide chains across the membrane. This is Protein translocase subunit SecA from Shewanella baltica (strain OS155 / ATCC BAA-1091).